The chain runs to 554 residues: Undecaprenyl phosphate-alpha-4-amino-4-deoxy-L-arabinose arabinosyl transferase (554 aa).

The next 11 helical transmembrane spans lie at 4 to 24 (LKGS…LLPI), 87 to 107 (FGSI…ATLL), 115 to 135 (FLAA…SYAV), 178 to 198 (FMTK…PIVI), 206 to 226 (LIIF…PWAL), 262 to 282 (YLPI…AALL), 293 to 313 (ELFF…VAKG), 315 to 335 (LPTY…AYAT), 352 to 372 (INLI…MGWV), 384 to 404 (QKVI…FATM), and 410 to 430 (HWHW…YLIP).

This sequence belongs to the glycosyltransferase 83 family.

The protein localises to the cell inner membrane. The catalysed reaction is 4-amino-4-deoxy-alpha-L-arabinopyranosyl di-trans,octa-cis-undecaprenyl phosphate + lipid IVA = lipid IIA + di-trans,octa-cis-undecaprenyl phosphate.. The protein operates within lipopolysaccharide metabolism; 4-amino-4-deoxy-beta-L-arabinose-lipid A biosynthesis. Functionally, catalyzes the transfer of the L-Ara4N moiety of the glycolipid undecaprenyl phosphate-alpha-L-Ara4N to lipid A. The modified arabinose is attached to lipid A and is required for resistance to polymyxin and cationic antimicrobial peptides. The chain is Undecaprenyl phosphate-alpha-4-amino-4-deoxy-L-arabinose arabinosyl transferase from Yersinia enterocolitica serotype O:8 / biotype 1B (strain NCTC 13174 / 8081).